The following is a 336-amino-acid chain: Anthranilate phosphoribosyltransferase (336 aa).

5-phospho-alpha-D-ribose 1-diphosphate-binding positions include Gly-78, 81–82 (GD), Thr-86, 88–91 (NVST), 106–114 (KHGNYSVSS), and Ser-118. Gly-78 is a binding site for anthranilate. Ser-90 is a Mg(2+) binding site. Asn-109 is a binding site for anthranilate. Arg-164 provides a ligand contact to anthranilate. Mg(2+) contacts are provided by Asp-222 and Glu-223.

It belongs to the anthranilate phosphoribosyltransferase family. In terms of assembly, homodimer. It depends on Mg(2+) as a cofactor.

It carries out the reaction N-(5-phospho-beta-D-ribosyl)anthranilate + diphosphate = 5-phospho-alpha-D-ribose 1-diphosphate + anthranilate. The protein operates within amino-acid biosynthesis; L-tryptophan biosynthesis; L-tryptophan from chorismate: step 2/5. In terms of biological role, catalyzes the transfer of the phosphoribosyl group of 5-phosphorylribose-1-pyrophosphate (PRPP) to anthranilate to yield N-(5'-phosphoribosyl)-anthranilate (PRA). The protein is Anthranilate phosphoribosyltransferase of Halobacterium salinarum (strain ATCC 29341 / DSM 671 / R1).